The following is a 254-amino-acid chain: NFU1 iron-sulfur cluster scaffold homolog, mitochondrial (254 aa).

A mitochondrion-targeting transit peptide spans 1–9; it reads MAATARRGW. Positions 173–241 are nifU; sequence IKELLDTRIR…IPEVEGVEQV (69 aa). The [4Fe-4S] cluster site is built by cysteine 210 and cysteine 213.

This sequence belongs to the NifU family. As to quaternary structure, monomer and homohexamer; the apo-NFU1 is a monomer, while the holo-NFU1 is a hexamer composed of a trimer of dimer that is probably linked by some 4Fe-4S cluster. Interacts with HIRA and EPM2A/laforin. Interacts with BOLA3. Interacts with HSPA9. As to expression, ubiquitous. Expression in adult lung is weak compared to fetal lung.

Its subcellular location is the mitochondrion. It localises to the cytoplasm. It is found in the cytosol. Iron-sulfur cluster scaffold protein which can assemble [4Fe-4S] clusters and deliver them to target proteins. This Homo sapiens (Human) protein is NFU1 iron-sulfur cluster scaffold homolog, mitochondrial (NFU1).